We begin with the raw amino-acid sequence, 235 residues long: Glycerol-3-phosphate acyltransferase (235 aa).

The next 6 helical transmembrane spans lie at 4–24, 56–76, 94–114, 124–144, 152–172, and 191–211; these read LLAI…IMAG, TVTL…VAFF, LLAG…GFKG, MLIG…LLTI, VASM…KYIF, and FHDS…LGIL.

Belongs to the PlsY family. As to quaternary structure, probably interacts with PlsX.

It localises to the cell inner membrane. The enzyme catalyses an acyl phosphate + sn-glycerol 3-phosphate = a 1-acyl-sn-glycero-3-phosphate + phosphate. It functions in the pathway lipid metabolism; phospholipid metabolism. Catalyzes the transfer of an acyl group from acyl-phosphate (acyl-PO(4)) to glycerol-3-phosphate (G3P) to form lysophosphatidic acid (LPA). This enzyme utilizes acyl-phosphate as fatty acyl donor, but not acyl-CoA or acyl-ACP. The sequence is that of Glycerol-3-phosphate acyltransferase from Chlorobium limicola (strain DSM 245 / NBRC 103803 / 6330).